The sequence spans 202 residues: Recombination protein RecR (202 aa).

Residues 61 to 76 (CARCNSFTEDEVCATC) form a C4-type zinc finger. The 96-residue stretch at 84-179 (GLLCIVETPA…KVTRLARGVP (96 aa)) folds into the Toprim domain.

Belongs to the RecR family.

Its function is as follows. May play a role in DNA repair. It seems to be involved in an RecBC-independent recombinational process of DNA repair. It may act with RecF and RecO. The sequence is that of Recombination protein RecR from Bordetella bronchiseptica (strain ATCC BAA-588 / NCTC 13252 / RB50) (Alcaligenes bronchisepticus).